The primary structure comprises 245 residues: Bis(5'-nucleosyl)-tetraphosphatase PrpE [asymmetrical] (245 aa).

Belongs to the PrpE family. The cofactor is Ni(2+).

The catalysed reaction is P(1),P(4)-bis(5'-guanosyl) tetraphosphate + H2O = GMP + GTP + 2 H(+). Asymmetrically hydrolyzes Ap4p to yield AMP and ATP. The protein is Bis(5'-nucleosyl)-tetraphosphatase PrpE [asymmetrical] of Anoxybacillus flavithermus (strain DSM 21510 / WK1).